Reading from the N-terminus, the 311-residue chain is Protein translocase subunit SecF (311 aa).

The next 6 membrane-spanning stretches (helical) occupy residues 19–39, 142–162, 166–186, 192–212, 245–265, and 272–292; these read AIYA…TQGL, MLAM…RFEL, LGAV…FSVL, LVVV…TIVV, ITSL…GAVI, and LLFG…PLVL.

The protein belongs to the SecD/SecF family. SecF subfamily. In terms of assembly, forms a complex with SecD. Part of the essential Sec protein translocation apparatus which comprises SecA, SecYEG and auxiliary proteins SecDF-YajC and YidC.

Its subcellular location is the cell inner membrane. Part of the Sec protein translocase complex. Interacts with the SecYEG preprotein conducting channel. SecDF uses the proton motive force (PMF) to complete protein translocation after the ATP-dependent function of SecA. The protein is Protein translocase subunit SecF of Magnetococcus marinus (strain ATCC BAA-1437 / JCM 17883 / MC-1).